A 159-amino-acid chain; its full sequence is GDP-mannose mannosyl hydrolase (159 aa).

Substrate-binding positions include 2–3, F8, and R36; that span reads FL. Residues 13-153 form the Nudix hydrolase domain; that stretch reads RSTPLVSLDF…SRAYFLAEKR (141 aa). Residues G49, E69, and Q122 each contribute to the Mg(2+) site. The Nudix box signature appears at 50–71; sequence GRVQKDETLEAAFERLTMAELG.

It belongs to the Nudix hydrolase family. As to quaternary structure, homodimer. It depends on Mg(2+) as a cofactor.

The enzyme catalyses GDP-alpha-D-mannose + H2O = D-mannose + GDP + H(+). Its function is as follows. Hydrolyzes GDP-mannose. The chain is GDP-mannose mannosyl hydrolase from Escherichia coli O157:H7.